Here is a 183-residue protein sequence, read N- to C-terminus: Putative manganese efflux pump MntP (183 aa).

The next 6 membrane-spanning stretches (helical) occupy residues 8 to 28 (IIAL…VALG), 40 to 60 (FYIG…GMAV), 72 to 92 (ATYA…IASF), 108 to 128 (LFFA…LGIF), 133 to 153 (MVTI…GLFV), and 163 to 183 (SYSE…LLFL).

The protein belongs to the MntP (TC 9.B.29) family.

The protein resides in the cell membrane. Its function is as follows. Probably functions as a manganese efflux pump. This is Putative manganese efflux pump MntP from Geobacillus kaustophilus (strain HTA426).